Here is a 394-residue protein sequence, read N- to C-terminus: MSKEKFERTKPHVNVGTIGHVDHGKTTLTAAITTVLAKTYGGAARAFDQIDNAPEEKARGITINTSHVEYDTPTRHYAHVDCPGHADYVKNMITGAAQMDGAILVVAATDGPMPQTREHILLGRQVGVPYIIVFLNKCDMVDDEELLELVEMEVRELLSQYDFPGDDTPIVRGSALKALEGDAEWEAKIIELAGFLDSYIPEPERAIDKPFLLPIEDVFSISGRGTVVTGRVERGIIKVGEEVEIVGIKETQKSTCTGVEMFRKLLDEGRAGENVGVLLRGIKREEIERGQVLAKPGTIKPHTKFESEVYILSKDEGGRHTPFFKGYRPQFYFRTTDVTGTIELPEGVEMVMPGDNIKMVVTLIHPIAMDDGLRFAIREGGRTVGAGVVAKVLG.

Residues 10–204 enclose the tr-type G domain; it reads KPHVNVGTIG…FLDSYIPEPE (195 aa). A G1 region spans residues 19–26; sequence GHVDHGKT. 19-26 is a binding site for GTP; sequence GHVDHGKT. Residue Thr-26 coordinates Mg(2+). The interval 60-64 is G2; it reads GITIN. The tract at residues 81 to 84 is G3; that stretch reads DCPG. GTP contacts are provided by residues 81-85 and 136-139; these read DCPGH and NKCD. Positions 136–139 are G4; it reads NKCD. The tract at residues 174–176 is G5; the sequence is SAL.

It belongs to the TRAFAC class translation factor GTPase superfamily. Classic translation factor GTPase family. EF-Tu/EF-1A subfamily. In terms of assembly, monomer.

The protein localises to the cytoplasm. It carries out the reaction GTP + H2O = GDP + phosphate + H(+). Functionally, GTP hydrolase that promotes the GTP-dependent binding of aminoacyl-tRNA to the A-site of ribosomes during protein biosynthesis. This chain is Elongation factor Tu, found in Salmonella arizonae (strain ATCC BAA-731 / CDC346-86 / RSK2980).